Consider the following 221-residue polypeptide: Interleukin-12 subunit alpha (221 aa).

A signal peptide spans 1–25 (MCPLRSLLLISTLVLLHHLPHLSLG). Disulfide bonds link Cys39/Cys112, Cys66/Cys198, and Cys87/Cys125. N-linked (GlcNAc...) asparagine glycosylation occurs at Asn95.

This sequence belongs to the IL-6 superfamily. In terms of assembly, heterodimer with IL12B; disulfide-linked. This heterodimer is known as interleukin IL-12. Heterodimer with EBI3/IL27B; not disulfide-linked. This heterodimer is known as interleukin IL-35. Interacts with NBR1; this interaction promotes IL-12 secretion.

Its subcellular location is the secreted. In terms of biological role, heterodimerizes with IL12B to form the IL-12 cytokine or with EBI3/IL27B to form the IL-35 cytokine. IL-12 is primarily produced by professional antigen-presenting cells (APCs) such as B-cells and dendritic cells (DCs) as well as macrophages and granulocytes and regulates T-cell and natural killer-cell responses, induces the production of interferon-gamma (IFN-gamma), favors the differentiation of T-helper 1 (Th1) cells and is an important link between innate resistance and adaptive immunity. Mechanistically, exerts its biological effects through a receptor composed of IL12R1 and IL12R2 subunits. Binding to the receptor results in the rapid tyrosine phosphorylation of a number of cellular substrates including the JAK family kinases TYK2 and JAK2. In turn, recruited STAT4 gets phosphorylated and translocates to the nucleus where it regulates cytokine/growth factor responsive genes. As part of IL-35, plays essential roles in maintaining the immune homeostasis of the liver microenvironment and also functions as an immune-suppressive cytokine. Mediates biological events through unconventional receptors composed of IL12RB2 and gp130/IL6ST heterodimers or homodimers. Signaling requires the transcription factors STAT1 and STAT4, which form a unique heterodimer that binds to distinct DNA sites. The chain is Interleukin-12 subunit alpha (IL12A) from Bos taurus (Bovine).